The following is a 56-amino-acid chain: Large ribosomal subunit protein bL33 (56 aa).

Belongs to the bacterial ribosomal protein bL33 family.

The chain is Large ribosomal subunit protein bL33 from Treponema denticola (strain ATCC 35405 / DSM 14222 / CIP 103919 / JCM 8153 / KCTC 15104).